We begin with the raw amino-acid sequence, 489 residues long: Lysine-specific permease LysP (489 aa).

Residues 2 to 22 (VSETKTTEAPGLRRELKARHL) are Cytoplasmic-facing. A helical membrane pass occupies residues 23–43 (TMIAIGGSIGTGLFVASGATI). The Periplasmic segment spans residues 44–45 (SQ). Residues 46-66 (AGPGGALLSYMLIGLMVYFLM) traverse the membrane as a helical segment. The Cytoplasmic portion of the chain corresponds to 67–105 (TSLGELAAYMPVSGSFATYGQNYVEEGFGFALGWNYWYN). The chain crosses the membrane as a helical span at residues 106-126 (WAVTIAVDLVAAQLVMSWWFP). The Periplasmic portion of the chain corresponds to 127–128 (DT). The chain crosses the membrane as a helical span at residues 129–149 (PGWIWSALFLGVIFLLNYISV). Residues 150 to 161 (RGFGEAEYWFSL) lie on the Cytoplasmic side of the membrane. A helical transmembrane segment spans residues 162-182 (IKVTTVIVFIIVGVLMIIGIF). The Periplasmic segment spans residues 183–197 (KGAQPAGWSNWTIGE). A helical membrane pass occupies residues 198–218 (APFAGGFAAMIGVAMIVGFSF). Topologically, residues 219–244 (QGTELIGIAAGESEDPAKNIPRAVRQ) are cytoplasmic. A helical membrane pass occupies residues 245–265 (VFWRILLFYVFAILIISLIIP). Residues 266 to 290 (YTDPSLLRNDVKDISVSPFTLVFQH) are Periplasmic-facing. A helical membrane pass occupies residues 291–311 (AGLLSAAAVMNAVILTAVLSA). The Cytoplasmic portion of the chain corresponds to 312–346 (GNSGMYASTRMLYTLACDGKAPRIFAKLSRGGVPR). Residues 347-367 (NALYATTVIAGLCFLTSMFGN) traverse the membrane as a helical segment. Residues 368–370 (QTV) lie on the Periplasmic side of the membrane. Residues 371–391 (YLWLLNTSGMTGFIAWLGIAI) form a helical membrane-spanning segment. The Cytoplasmic portion of the chain corresponds to 392 to 413 (SHYRFRRGYVLQGHDINDLPYR). Residues 414–434 (SGFFPLGPIFAFILCLIITLG) traverse the membrane as a helical segment. Residues 435-446 (QNYEAFLKDTID) are Periplasmic-facing. A helical transmembrane segment spans residues 447 to 467 (WGGVAATYIGIPLFLIIWFGY). Over 468 to 489 (KLIKGTHFVRYSEMKFPQNDKK) the chain is Cytoplasmic.

This sequence belongs to the amino acid-polyamine-organocation (APC) superfamily. Amino acid transporter (AAT) (TC 2.A.3.1) family. As to quaternary structure, interacts strongly with the transcriptional activator CadC in the absence of lysine or at low lysine concentrations. Interaction is markedly attenuated under increasing lysine levels. Concomitant pH-dependent protonation of periplasmic amino acids in both proteins dissolves their electrostatic connections resulting in further destabilization of the CadC/LysP interaction. Low pH promotes oligomerization of LysP.

The protein localises to the cell inner membrane. It carries out the reaction L-lysine(out) + H(+)(out) = L-lysine(in) + H(+)(in). Its function is as follows. Permease involved in lysine uptake. In addition, functions as a lysine sensor that mediates the lysine-dependent regulation of the transcriptional activator CadC. In the absence of lysine, or at low lysine concentrations, LysP inhibits CadC by an interaction with the transmembrane domain of CadC. In the presence of lysine, LysP loses its ability to interact with and inhibit CadC, and acts as a lysine permease. The chain is Lysine-specific permease LysP from Escherichia coli (strain K12).